Consider the following 337-residue polypeptide: Ribosomal RNA small subunit methyltransferase H (337 aa).

S-adenosyl-L-methionine contacts are provided by residues 33–35, Asp53, Asp101, and Gln108; that span reads AGH.

Belongs to the methyltransferase superfamily. RsmH family.

The protein resides in the cytoplasm. It catalyses the reaction cytidine(1402) in 16S rRNA + S-adenosyl-L-methionine = N(4)-methylcytidine(1402) in 16S rRNA + S-adenosyl-L-homocysteine + H(+). Specifically methylates the N4 position of cytidine in position 1402 (C1402) of 16S rRNA. In Herpetosiphon aurantiacus (strain ATCC 23779 / DSM 785 / 114-95), this protein is Ribosomal RNA small subunit methyltransferase H.